The following is a 1905-amino-acid chain: Low-density lipoprotein receptor-related protein 4 (1905 aa).

A signal peptide spans 1 to 20 (MRRWWGALLLGALLCAHGIA). The Extracellular segment spans residues 21–1725 (SSLECACGRS…AAPGEGLHVS (1705 aa)). 8 consecutive LDL-receptor class A domains span residues 26-67 (ACGR…DGCT), 70-106 (TCSP…QDCP), 109-144 (ECEE…EQCD), 147-183 (KCSD…ESCP), 190-226 (PCNL…SDCS), 230-266 (PCRS…RNCT), 269-305 (MCTA…ENCE), and 311-350 (QCAS…QNCR). Cystine bridges form between C27–C44, C34–C57, C51–C66, C71–C83, C78–C96, C90–C105, C110–C122, C117–C135, C129–C143, C148–C160, C155–C173, C167–C182, C191–C203, C198–C216, C210–C225, C231–C243, C238–C256, C250–C265, C270–C282, C277–C295, C289–C304, C312–C324, C319–C337, C331–C349, C358–C369, C365–C378, C380–C393, C399–C409, C405–C418, and C420–C433. Residue N264 is glycosylated (N-linked (GlcNAc...) asparagine). The 41-residue stretch at 354-394 (GEENCNVNNGGCAQKCQMVRGAVQCTCHTGYRLTEDGRTCQ) folds into the EGF-like 1; atypical domain. Positions 395–434 (DVNECAEEGYCSQGCTNTEGAFQCWCEAGYELRPDRRSCK) constitute an EGF-like 2; calcium-binding domain. LDL-receptor class B repeat units lie at residues 480–522 (ELVF…DWVH), 523–565 (DKLY…HPME), 566–609 (GTIY…DYAG), 610–652 (RRMY…FEDS), and 653–693 (LYWT…LHPQ). N498 carries an N-linked (GlcNAc...) asparagine glycan. The EGF-like 3 domain maps to 698-737 (GKNRCGDNNGGCTHLCLPSGQNYTCACPTGFRKINSHACA). 3 disulfide bridges follow: C702/C713, C709/C722, and C724/C736. N719 carries N-linked (GlcNAc...) asparagine glycosylation. LDL-receptor class B repeat units lie at residues 785–827 (DHVY…DWVT), 828–870 (NKLY…EPMG), 871–914 (GYMY…DYGS), 915–956 (QRLY…LYGQ), and 957–998 (RIYW…FHRQ). A glycan (N-linked (GlcNAc...) asparagine) is linked at N901. Residue N1077 is glycosylated (N-linked (GlcNAc...) asparagine). LDL-receptor class B repeat units follow at residues 1093–1135 (GKVY…DAIG), 1136–1178 (RKVY…YHEM), 1179–1222 (GFMY…DKTS), 1223–1263 (SQLL…LLDS), 1264–1306 (YIYW…DRAQ), 1397–1439 (GKVY…DWVA), 1440–1482 (RNLY…FPRK), 1483–1526 (GYLF…DYDT), 1527–1568 (RRIY…QDRW), and 1569–1610 (IYWT…SPQR). N1415 and N1467 each carry an N-linked (GlcNAc...) asparagine glycan. The interval 1661–1696 (ATSMNEKSPVLPNTLPTTLHSSTTKTRTSLEGAGGR) is disordered. Residues 1674–1690 (TLPTTLHSSTTKTRTSL) are compositionally biased toward low complexity. Residues 1726–1746 (YAIGGLLSILLILLVIAALML) traverse the membrane as a helical segment. The Cytoplasmic portion of the chain corresponds to 1747-1905 (YRHRKSKFTD…ERKLSSESQV (159 aa)). Residues 1852 to 1905 (ASSGSLDDTETEQLLQEEQSECSSVHTAATPERRGSLPDTGWKHERKLSSESQV) form a disordered region. The span at 1882–1905 (PERRGSLPDTGWKHERKLSSESQV) shows a compositional bias: basic and acidic residues.

It belongs to the LDLR family. In terms of assembly, homooligomer. Interacts with MUSK; the heterodimer forms an AGRIN receptor complex that binds AGRIN resulting in activation of MUSK. Interacts (via the extracellular domain) with SOST; the interaction facilitates the inhibition of Wnt signaling. Interacts with MESD; the interaction promotes glycosylation of LRP4 and its cell-surface expression. Post-translationally, N-glycosylation is required for cell surface location.

Its subcellular location is the cell membrane. Functionally, mediates SOST-dependent inhibition of bone formation. Functions as a specific facilitator of SOST-mediated inhibition of Wnt signaling. Plays a key role in the formation and the maintenance of the neuromuscular junction (NMJ), the synapse between motor neuron and skeletal muscle. Directly binds AGRIN and recruits it to the MUSK signaling complex. Mediates the AGRIN-induced phosphorylation of MUSK, the kinase of the complex. The activation of MUSK in myotubes induces the formation of NMJ by regulating different processes including the transcription of specific genes and the clustering of AChR in the postsynaptic membrane. Alternatively, may be involved in the negative regulation of the canonical Wnt signaling pathway, being able to antagonize the LRP6-mediated activation of this pathway. More generally, has been proposed to function as a cell surface endocytic receptor binding and internalizing extracellular ligands for degradation by lysosomes. Plays an essential role in the process of digit differentiation. The chain is Low-density lipoprotein receptor-related protein 4 (Lrp4) from Mus musculus (Mouse).